Here is a 110-residue protein sequence, read N- to C-terminus: Large ribosomal subunit protein uL22 (110 aa).

Belongs to the universal ribosomal protein uL22 family. In terms of assembly, part of the 50S ribosomal subunit.

Functionally, this protein binds specifically to 23S rRNA; its binding is stimulated by other ribosomal proteins, e.g. L4, L17, and L20. It is important during the early stages of 50S assembly. It makes multiple contacts with different domains of the 23S rRNA in the assembled 50S subunit and ribosome. In terms of biological role, the globular domain of the protein is located near the polypeptide exit tunnel on the outside of the subunit, while an extended beta-hairpin is found that lines the wall of the exit tunnel in the center of the 70S ribosome. The chain is Large ribosomal subunit protein uL22 from Aggregatibacter actinomycetemcomitans (Actinobacillus actinomycetemcomitans).